The chain runs to 445 residues: Probable glycine dehydrogenase (decarboxylating) subunit 1 (445 aa).

The protein belongs to the GcvP family. N-terminal subunit subfamily. The glycine cleavage system is composed of four proteins: P, T, L and H. In this organism, the P 'protein' is a heterodimer of two subunits.

The catalysed reaction is N(6)-[(R)-lipoyl]-L-lysyl-[glycine-cleavage complex H protein] + glycine + H(+) = N(6)-[(R)-S(8)-aminomethyldihydrolipoyl]-L-lysyl-[glycine-cleavage complex H protein] + CO2. Functionally, the glycine cleavage system catalyzes the degradation of glycine. The P protein binds the alpha-amino group of glycine through its pyridoxal phosphate cofactor; CO(2) is released and the remaining methylamine moiety is then transferred to the lipoamide cofactor of the H protein. The sequence is that of Probable glycine dehydrogenase (decarboxylating) subunit 1 from Anaeromyxobacter dehalogenans (strain 2CP-1 / ATCC BAA-258).